The chain runs to 312 residues: Pyridoxal 5'-phosphate synthase subunit PDX1 (312 aa).

A D-ribose 5-phosphate-binding site is contributed by Asp-43. Lys-100 functions as the Schiff-base intermediate with D-ribose 5-phosphate in the catalytic mechanism. Gly-172 is a D-ribose 5-phosphate binding site. Arg-184 contacts D-glyceraldehyde 3-phosphate. D-ribose 5-phosphate is bound by residues Gly-233 and 254 to 255 (GS).

Belongs to the PdxS/SNZ family.

It carries out the reaction aldehydo-D-ribose 5-phosphate + D-glyceraldehyde 3-phosphate + L-glutamine = pyridoxal 5'-phosphate + L-glutamate + phosphate + 3 H2O + H(+). Its pathway is cofactor biosynthesis; pyridoxal 5'-phosphate biosynthesis. In terms of biological role, catalyzes the formation of pyridoxal 5'-phosphate from ribose 5-phosphate (RBP), glyceraldehyde 3-phosphate (G3P) and ammonia. The ammonia is provided by PDX2. Can also use ribulose 5-phosphate and dihydroxyacetone phosphate as substrates, resulting from enzyme-catalyzed isomerization of RBP and G3P, respectively. Also plays an indirect role in resistance to singlet oxygen-generating photosensitizers. In Phaseolus vulgaris (Kidney bean), this protein is Pyridoxal 5'-phosphate synthase subunit PDX1 (PDX1).